The chain runs to 288 residues: Probable ketoamine kinase VV1_2562 (288 aa).

92 to 94 (NFL) contacts ATP. Aspartate 195 functions as the Proton acceptor in the catalytic mechanism.

This sequence belongs to the fructosamine kinase family.

Ketoamine kinase that phosphorylates ketoamines on the third carbon of the sugar moiety to generate ketoamine 3-phosphate. The protein is Probable ketoamine kinase VV1_2562 of Vibrio vulnificus (strain CMCP6).